The sequence spans 1117 residues: Sodium-driven chloride bicarbonate exchanger (1117 aa).

2 disordered regions span residues 1–23 and 58–97; these read MEIK…EEAV and GRKS…TPSQ. The Cytoplasmic segment spans residues 1 to 508; that stretch reads MEIKDQGAQM…DFRDAFSLQC (508 aa). Over residues 59 to 76 the composition is skewed to basic residues; that stretch reads RKSHRRHRHRGHKHRKRD. Residue Ser-89 is modified to Phosphoserine. Thr-94 is modified (phosphothreonine). Ser-275 carries the phosphoserine modification. 2 disordered regions span residues 282 to 309 and 431 to 476; these read DFSK…KGPP and WDPS…PELQ. The helical transmembrane segment at 509–529 threads the bilayer; it reads LASFLFLYCACMSPVITFGGL. The Extracellular portion of the chain corresponds to 530 to 537; sequence LGEATEGR. A helical transmembrane segment spans residues 538–558; that stretch reads ISAIESLFGASMTGIAYSLFG. Over 559–561 the chain is Cytoplasmic; the sequence is GQP. Residues 562 to 582 form a helical membrane-spanning segment; the sequence is LTILGSTGPVLVFEKILFKFC. The Extracellular portion of the chain corresponds to 583–595; it reads KEYGLSYLSLRAS. Residues 596–616 form a helical membrane-spanning segment; sequence IGLWTATLCIILVATDASSLV. Residues 617-625 lie on the Cytoplasmic side of the membrane; it reads CYITRFTEE. A helical transmembrane segment spans residues 626–646; it reads AFASLICIIFIYEALEKLFEL. Residues 647 to 719 are Extracellular-facing; it reads SESYPINMHN…VGRACGHGHP (73 aa). N-linked (GlcNAc...) asparagine glycans are attached at residues Asn-676, Asn-686, and Asn-696. The chain crosses the membrane as a helical span at residues 720-740; that stretch reads YVPDVLFWSVILFFSTVTMSA. Over 741 to 761 the chain is Cytoplasmic; sequence TLKQFKTSRYFPTKVRSIVSD. A helical transmembrane segment spans residues 762–782; that stretch reads FAVFLTILCMVLIDYAIGIPS. Topologically, residues 783–808 are extracellular; the sequence is PKLQVPSVFKPTRDDRGWFVTPLGPN. The chain crosses the membrane as a helical span at residues 809-829; the sequence is PWWTIIAAIIPALLCTILIFM. Residues 830 to 854 are Cytoplasmic-facing; that stretch reads DQQITAVIINRKEHKLKKGCGYHLD. Residues 855–875 traverse the membrane as a helical segment; sequence LLMVAVMLGVCSIMGLPWFVA. The Extracellular portion of the chain corresponds to 876 to 911; it reads ATVLSITHVNSLKLESECSAPGEQPKFLGIREQRVT. A helical membrane pass occupies residues 912–932; the sequence is GLMIFILMGSSVFMTSILKFI. Topologically, residues 933–934 are cytoplasmic; it reads PM. The chain crosses the membrane as a helical span at residues 935 to 955; that stretch reads PVLYGVFLYMGASSLKGIQLF. Over 956–997 the chain is Extracellular; the sequence is DRIKLFWMPAKHQPDFIYLRHVPLRKVHLFTVIQMSCLGLLW. The helical transmembrane segment at 998–1018 threads the bilayer; that stretch reads IIKVSRAAIVFPMMVLALVFV. The Cytoplasmic portion of the chain corresponds to 1019–1117; it reads RKLMDFLFTK…SRFPSKSSPS (99 aa). A phosphoserine mark is found at Ser-1056 and Ser-1084.

It belongs to the anion exchanger (TC 2.A.31) family. In terms of processing, N-glycosylated. As to expression, in the brain, detected in cerebral cortex, subcortex, cerebellum, hippocampus and medulla (at protein level). Expressed in neurons but not in astrocytes (at protein level). Isoforms starting with Met-Glu-Ile-Lys are found predominantly in the brain with lower levels in the eye while isoforms starting with Met-Cys-Asp-Leu are most abundant in the kidney with lower levels in the duodenum, jejunum and ileum (at protein level). In the kidney, isoforms starting with Met-Cys-Asp-Leu are primarily expressed in the cortex, the outer stripe of the outer medulla and the inner stripe of the outer medulla (ISOM) but are not detectable in the inner medulla (IM) while isoforms starting with Met-Glu-Ile-Lys are predominantly expressed in the ISOM and IM. Expressed in the brain, in the hippocampus as well as in dentate gyrus, cortical layers, cerebellum, olfactory bulb and in the epithelial cells of the choroid plexus. Detected in pituitary, testis, kidney and ileum. Detected also in spleen and lung. In terms of tissue distribution, mainly expressed in the jejenum (at protein level).

It is found in the basolateral cell membrane. Its subcellular location is the apical cell membrane. The protein localises to the cell projection. The protein resides in the dendrite. It localises to the axon. It is found in the perikaryon. Its subcellular location is the presynapse. The protein localises to the postsynapse. It catalyses the reaction 2 hydrogencarbonate(out) + chloride(in) + Na(+)(out) = 2 hydrogencarbonate(in) + chloride(out) + Na(+)(in). Functionally, sodium/bicarbonate cotransporter which plays an important role in regulating intracellular pH. Has been shown to act as a sodium/bicarbonate cotransporter in exchange for intracellular chloride. Has also been shown to act as a sodium/biocarbonate cotransporter which does not couple net influx of bicarbonate to net efflux of chloride, with the observed chloride efflux being due to chloride self-exchange. Controls neuronal pH and may contribute to the secretion of cerebrospinal fluid. Acting on presynaptic intracellular pH, it promotes GABA release, reduces the excitability of CA1 pyramidal neurons, and modulates short-term synaptic plasticity. Required in retinal cells to maintain normal pH which is necessary for normal vision. In the kidney, likely to mediate bicarbonate reclamation in the apical membrane of the proximal tubules. Its function is as follows. Sodium/bicarbonate cotransporter which mediates cotransport of sodium and bicarbonate in association with an efflux of intracellular chloride and is involved in NaCl absorption in the small intestine. This is Sodium-driven chloride bicarbonate exchanger from Rattus norvegicus (Rat).